Reading from the N-terminus, the 499-residue chain is Probable cytosol aminopeptidase (499 aa).

Residues Lys-269 and Asp-274 each coordinate Mn(2+). The active site involves Lys-281. The Mn(2+) site is built by Asp-292, Asp-351, and Glu-353. Arg-355 is an active-site residue.

The protein belongs to the peptidase M17 family. Mn(2+) is required as a cofactor.

It is found in the cytoplasm. The enzyme catalyses Release of an N-terminal amino acid, Xaa-|-Yaa-, in which Xaa is preferably Leu, but may be other amino acids including Pro although not Arg or Lys, and Yaa may be Pro. Amino acid amides and methyl esters are also readily hydrolyzed, but rates on arylamides are exceedingly low.. The catalysed reaction is Release of an N-terminal amino acid, preferentially leucine, but not glutamic or aspartic acids.. In terms of biological role, presumably involved in the processing and regular turnover of intracellular proteins. Catalyzes the removal of unsubstituted N-terminal amino acids from various peptides. This chain is Probable cytosol aminopeptidase, found in Actinobacillus pleuropneumoniae serotype 5b (strain L20).